The primary structure comprises 260 residues: Dehydrogenase/reductase SDR family member 4 (260 aa).

An NADP(+)-binding site is contributed by 14 to 38 (IVTAATKGIGLAIAERLLDEGASVV). Ser148 serves as a coordination point for substrate. Tyr161 functions as the Proton acceptor in the catalytic mechanism. Lys165 serves as a coordination point for NADP(+).

It belongs to the short-chain dehydrogenases/reductases (SDR) family.

It catalyses the reaction a secondary alcohol + NADP(+) = a ketone + NADPH + H(+). Functionally, catalyzes the reduction of isatin, 4-oxonon-2-enal, 9,10-phenanthrenequinone, menadione, 2,3-hexaenadione, 3,4-hexanedione and 2,3-heptanedione. The protein is Dehydrogenase/reductase SDR family member 4 of Caenorhabditis elegans.